The primary structure comprises 726 residues: Catalase-peroxidase (726 aa).

Positions 1 to 33 are disordered; the sequence is MSTTDDTHNTLSTGKCPFHQGGHDRSAGAGTAS. The tryptophyl-tyrosyl-methioninium (Trp-Tyr) (with M-252) cross-link spans 105–226; it reads WHGAGTYRSI…LGATEMGLIY (122 aa). The active-site Proton acceptor is His106. Positions 226–252 form a cross-link, tryptophyl-tyrosyl-methioninium (Tyr-Met) (with W-105); that stretch reads YVNPEGPDHSGEPLSAAAAIRATFGNM. His267 contributes to the heme b binding site.

The protein belongs to the peroxidase family. Peroxidase/catalase subfamily. As to quaternary structure, homodimer or homotetramer. Heme b is required as a cofactor. Formation of the three residue Trp-Tyr-Met cross-link is important for the catalase, but not the peroxidase activity of the enzyme.

The catalysed reaction is H2O2 + AH2 = A + 2 H2O. The enzyme catalyses 2 H2O2 = O2 + 2 H2O. Functionally, bifunctional enzyme with both catalase and broad-spectrum peroxidase activity. The sequence is that of Catalase-peroxidase from Salmonella schwarzengrund (strain CVM19633).